The sequence spans 314 residues: ATP synthase gamma chain (314 aa).

Belongs to the ATPase gamma chain family. F-type ATPases have 2 components, CF(1) - the catalytic core - and CF(0) - the membrane proton channel. CF(1) has five subunits: alpha(3), beta(3), gamma(1), delta(1), epsilon(1). CF(0) has three main subunits: a, b and c.

The protein localises to the cell inner membrane. In terms of biological role, produces ATP from ADP in the presence of a proton gradient across the membrane. The gamma chain is believed to be important in regulating ATPase activity and the flow of protons through the CF(0) complex. This chain is ATP synthase gamma chain, found in Gloeobacter violaceus (strain ATCC 29082 / PCC 7421).